The sequence spans 307 residues: Methionyl-tRNA formyltransferase (307 aa).

108 to 111 contributes to the (6S)-5,6,7,8-tetrahydrofolate binding site; sequence SLLP.

The protein belongs to the Fmt family.

It carries out the reaction L-methionyl-tRNA(fMet) + (6R)-10-formyltetrahydrofolate = N-formyl-L-methionyl-tRNA(fMet) + (6S)-5,6,7,8-tetrahydrofolate + H(+). Functionally, attaches a formyl group to the free amino group of methionyl-tRNA(fMet). The formyl group appears to play a dual role in the initiator identity of N-formylmethionyl-tRNA by promoting its recognition by IF2 and preventing the misappropriation of this tRNA by the elongation apparatus. This chain is Methionyl-tRNA formyltransferase, found in Stenotrophomonas maltophilia (strain R551-3).